An 88-amino-acid polypeptide reads, in one-letter code: Small ribosomal subunit protein uS17 (88 aa).

It belongs to the universal ribosomal protein uS17 family. As to quaternary structure, part of the 30S ribosomal subunit.

Its function is as follows. One of the primary rRNA binding proteins, it binds specifically to the 5'-end of 16S ribosomal RNA. The chain is Small ribosomal subunit protein uS17 from Lactobacillus gasseri (strain ATCC 33323 / DSM 20243 / BCRC 14619 / CIP 102991 / JCM 1131 / KCTC 3163 / NCIMB 11718 / NCTC 13722 / AM63).